Reading from the N-terminus, the 209-residue chain is MTLASQIATQLLDIKAVYLKPEDPFTWASGIKSPIYTDNRVTLSYPKTRDLIENGFVETIKAHFPEVEVIAGTATAGIPHGAIIADKMTLPFAYIRSKPKDHGAGNQIEGRVLKGQKMVIIEDLISTGGSVLDAAAAASREGADVLGVVAIFTYELPKASQNFKEAGIKLITLSNYTELIAVAKLQGYITNDGLHLLKKFKEDQVNWQQ.

5-phospho-alpha-D-ribose 1-diphosphate-binding positions include Arg-96, Lys-100, His-102, and 122–130 (EDLISTGGS). An orotate-binding site is contributed by Ser-126.

This sequence belongs to the purine/pyrimidine phosphoribosyltransferase family. PyrE subfamily. In terms of assembly, homodimer. Requires Mg(2+) as cofactor.

The enzyme catalyses orotidine 5'-phosphate + diphosphate = orotate + 5-phospho-alpha-D-ribose 1-diphosphate. The protein operates within pyrimidine metabolism; UMP biosynthesis via de novo pathway; UMP from orotate: step 1/2. Catalyzes the transfer of a ribosyl phosphate group from 5-phosphoribose 1-diphosphate to orotate, leading to the formation of orotidine monophosphate (OMP). In Streptococcus pyogenes serotype M1, this protein is Orotate phosphoribosyltransferase.